The following is a 277-amino-acid chain: Glucose-6-phosphatase catalytic subunit 1 (277 aa).

Arg4 provides a ligand contact to substrate. 2 helical membrane-spanning segments follow: residues 39-59 and 67-87; these read GHAM…LSIA and LLYR…ELVV. Catalysis depends on His40, which acts as the Proton donor. Arg91 provides a ligand contact to substrate. His97 functions as the Nucleophile in the catalytic mechanism. 3 helical membrane-spanning segments follow: residues 131-151, 215-235, and 250-270; these read FLIT…LKAL, IGCI…TFSP, and AVAL…IYPV. Residues 274–277 carry the Prevents secretion from ER motif; that stretch reads GKNL.

The protein belongs to the glucose-6-phosphatase family.

It localises to the endoplasmic reticulum membrane. It carries out the reaction D-glucose 6-phosphate + H2O = D-glucose + phosphate. It functions in the pathway carbohydrate biosynthesis; gluconeogenesis. Hydrolyzes glucose-6-phosphate to glucose in the endoplasmic reticulum. Forms with the glucose-6-phosphate transporter (SLC37A4/G6PT) the complex responsible for glucose production in the terminal step of glycogenolysis and gluconeogenesis. Hence, it is the key enzyme in homeostatic regulation of blood glucose levels. This is Glucose-6-phosphatase catalytic subunit 1 (g6pc1) from Haplochromis xenognathus (Lake Victoria cichlid).